The following is a 435-amino-acid chain: Bud site selection protein RAX1 (435 aa).

At 1 to 297 (MKEELSKVSS…PFSNHTSISR (297 aa)) the chain is on the cytoplasmic side. One can recognise an RGS domain in the interval 159 to 248 (VDEIMKRRSQ…LEMDCFPKFL (90 aa)). Position 167 is a phosphoserine (Ser167). Residues 298–318 (IGFGLLWLGIGFWIGYVLIFL) traverse the membrane as a helical segment. Residues 319–325 (AYSRAIR) are Extracellular-facing. Residues 326–346 (VVTVVPFTLGCYCIVCGMYQV) traverse the membrane as a helical segment. Topologically, residues 347–409 (DIVYSWFGVT…FTRQLLRKRG (63 aa)) are cytoplasmic. The chain crosses the membrane as a helical span at residues 410–430 (LWCLLLVVGATAAFTVIFSCV). Residues 431 to 435 (PGRRV) lie on the Extracellular side of the membrane.

As to quaternary structure, forms an heterodimeric complex with RAX2. Also interacts with BUD8 and BUD9.

It is found in the cell membrane. The protein resides in the bud neck. Its subcellular location is the bud tip. Functionally, required for the establishment of the bipolar budding pattern. Involved in selecting bud sites at both the distal and proximal poles of daughter cells as well as near previously used division sites on mother cells. The RAX1-RAX2 complex performs the asymmetric localization of the two cortical landmarks, BUD8 and BUD9, at the distal and proximal poles, respectively. This chain is Bud site selection protein RAX1, found in Saccharomyces cerevisiae (strain ATCC 204508 / S288c) (Baker's yeast).